Here is a 125-residue protein sequence, read N- to C-terminus: Ribonuclease P protein component 1 (125 aa).

Residues 1-13 (MRRNGKEGKDRAP) are compositionally biased toward basic and acidic residues. The disordered stretch occupies residues 1–24 (MRRNGKEGKDRAPGRPQRKGQEVA).

Belongs to the eukaryotic/archaeal RNase P protein component 1 family. In terms of assembly, consists of a catalytic RNA component and at least 4-5 protein subunits.

The protein localises to the cytoplasm. The catalysed reaction is Endonucleolytic cleavage of RNA, removing 5'-extranucleotides from tRNA precursor.. In terms of biological role, part of ribonuclease P, a protein complex that generates mature tRNA molecules by cleaving their 5'-ends. The chain is Ribonuclease P protein component 1 from Thermococcus onnurineus (strain NA1).